We begin with the raw amino-acid sequence, 277 residues long: MESAVDRHVFYISDGTAITAEVLGHAVMSQFPVAISSVTLPFVENISRARAVKEQIDAICQQTGIRPLVFYSIVIPEIRDIILQSEGFCQDIVQALVAPLQQELNLDPTPVAHRTHGLNPGNLIKYDARIAAIDYTLAHDDGISLRNLDQAQVILLGVSRCGKTPTSLYLAMQYGIRAANYPFIADDMDNLVLPASLKPLQHKMFGLTINPERLAAIREERRENSRYASLRQCRMEVTEVEALYRKNKIPCLNSTNYSVEEIATKIMDIMGLNRRMY.

157-164 (GVSRCGKT) is a binding site for ADP.

This sequence belongs to the pyruvate, phosphate/water dikinase regulatory protein family. PSRP subfamily.

It catalyses the reaction [pyruvate, water dikinase] + ADP = [pyruvate, water dikinase]-phosphate + AMP + H(+). It carries out the reaction [pyruvate, water dikinase]-phosphate + phosphate + H(+) = [pyruvate, water dikinase] + diphosphate. Its function is as follows. Bifunctional serine/threonine kinase and phosphorylase involved in the regulation of the phosphoenolpyruvate synthase (PEPS) by catalyzing its phosphorylation/dephosphorylation. This is Putative phosphoenolpyruvate synthase regulatory protein from Klebsiella pneumoniae subsp. pneumoniae (strain ATCC 700721 / MGH 78578).